A 250-amino-acid chain; its full sequence is Type III pantothenate kinase (250 aa).

13–20 (DVGNSYLK) lines the ATP pocket. Position 110–113 (110–113 (GNDL)) interacts with substrate. The active-site Proton acceptor is Asp-112. Thr-134 contacts ATP. Thr-186 serves as a coordination point for substrate.

It belongs to the type III pantothenate kinase family. As to quaternary structure, homodimer. NH4(+) serves as cofactor. Requires K(+) as cofactor.

It is found in the cytoplasm. The catalysed reaction is (R)-pantothenate + ATP = (R)-4'-phosphopantothenate + ADP + H(+). The protein operates within cofactor biosynthesis; coenzyme A biosynthesis; CoA from (R)-pantothenate: step 1/5. In terms of biological role, catalyzes the phosphorylation of pantothenate (Pan), the first step in CoA biosynthesis. This chain is Type III pantothenate kinase, found in Mycoplasmopsis synoviae (strain 53) (Mycoplasma synoviae).